A 229-amino-acid polypeptide reads, in one-letter code: Uracil-DNA glycosylase (229 aa).

Residue Asp64 is the Proton acceptor of the active site.

Belongs to the uracil-DNA glycosylase (UDG) superfamily. UNG family.

Its subcellular location is the cytoplasm. It carries out the reaction Hydrolyzes single-stranded DNA or mismatched double-stranded DNA and polynucleotides, releasing free uracil.. In terms of biological role, excises uracil residues from the DNA which can arise as a result of misincorporation of dUMP residues by DNA polymerase or due to deamination of cytosine. The chain is Uracil-DNA glycosylase from Shigella flexneri serotype 5b (strain 8401).